A 156-amino-acid polypeptide reads, in one-letter code: ATP synthase subunit b (156 aa).

A helical transmembrane segment spans residues 11–31; sequence AIAFILFVAFCMKYVWPPLMA.

The protein belongs to the ATPase B chain family. F-type ATPases have 2 components, F(1) - the catalytic core - and F(0) - the membrane proton channel. F(1) has five subunits: alpha(3), beta(3), gamma(1), delta(1), epsilon(1). F(0) has three main subunits: a(1), b(2) and c(10-14). The alpha and beta chains form an alternating ring which encloses part of the gamma chain. F(1) is attached to F(0) by a central stalk formed by the gamma and epsilon chains, while a peripheral stalk is formed by the delta and b chains.

It localises to the cell inner membrane. Its function is as follows. F(1)F(0) ATP synthase produces ATP from ADP in the presence of a proton or sodium gradient. F-type ATPases consist of two structural domains, F(1) containing the extramembraneous catalytic core and F(0) containing the membrane proton channel, linked together by a central stalk and a peripheral stalk. During catalysis, ATP synthesis in the catalytic domain of F(1) is coupled via a rotary mechanism of the central stalk subunits to proton translocation. In terms of biological role, component of the F(0) channel, it forms part of the peripheral stalk, linking F(1) to F(0). In Erwinia tasmaniensis (strain DSM 17950 / CFBP 7177 / CIP 109463 / NCPPB 4357 / Et1/99), this protein is ATP synthase subunit b.